Consider the following 248-residue polypeptide: 5'-nucleotidase SurE (248 aa).

A divalent metal cation contacts are provided by D8, D9, S39, and N91.

The protein belongs to the SurE nucleotidase family. A divalent metal cation is required as a cofactor.

The protein localises to the cytoplasm. It carries out the reaction a ribonucleoside 5'-phosphate + H2O = a ribonucleoside + phosphate. Functionally, nucleotidase that shows phosphatase activity on nucleoside 5'-monophosphates. The chain is 5'-nucleotidase SurE from Neisseria gonorrhoeae (strain ATCC 700825 / FA 1090).